Consider the following 331-residue polypeptide: 6-phosphogluconolactonase (331 aa).

The protein belongs to the cycloisomerase 2 family.

It carries out the reaction 6-phospho-D-glucono-1,5-lactone + H2O = 6-phospho-D-gluconate + H(+). The protein operates within carbohydrate degradation; pentose phosphate pathway; D-ribulose 5-phosphate from D-glucose 6-phosphate (oxidative stage): step 2/3. Its function is as follows. Catalyzes the hydrolysis of 6-phosphogluconolactone to 6-phosphogluconate. The polypeptide is 6-phosphogluconolactonase (Enterobacter sp. (strain 638)).